A 196-amino-acid polypeptide reads, in one-letter code: Peroxiredoxin TSA1 (196 aa).

Positions 3–161 (AQVQKQAPTF…ALRLVEAFQW (159 aa)) constitute a Thioredoxin domain. Lys14 participates in a covalent cross-link: Glycyl lysine isopeptide (Lys-Gly) (interchain with G-Cter in ubiquitin). A substrate-binding site is contributed by 45–47 (TFV). Cys48 functions as the Cysteine sulfenic acid (-SOH) intermediate in the catalytic mechanism. A Glycyl lysine isopeptide (Lys-Gly) (interchain with G-Cter in ubiquitin) cross-link involves residue Lys89. Arg124 lines the substrate pocket. Lys132 participates in a covalent cross-link: Glycyl lysine isopeptide (Lys-Gly) (interchain with G-Cter in ubiquitin). The residue at position 174 (Thr174) is a Phosphothreonine.

It belongs to the peroxiredoxin family. AhpC/Prx1 subfamily. In terms of assembly, homodimer; disulfide-linked, upon oxidation. Interacts with YAP1 via transient disulfide linkages. In terms of processing, the enzyme can be inactivated by further oxidation of the cysteine sulfenic acid (C(P)-SOH) to sulphinic acid (C(P)-SO2H) instead of its condensation to a disulfide bond. It can be reactivated by forming a transient disulfide bond with sulfiredoxin SRX1, which reduces the cysteine sulfinic acid in an ATP- and Mg-dependent manner.

It is found in the cytoplasm. It catalyses the reaction a hydroperoxide + [thioredoxin]-dithiol = an alcohol + [thioredoxin]-disulfide + H2O. Functionally, thiol-specific peroxidase that catalyzes the reduction of hydrogen peroxide and organic hydroperoxides to water and alcohols, respectively. Plays a role in cell protection against oxidative stress by detoxifying peroxides and as sensor of hydrogen peroxide-mediated signaling events. Protects the cell against the oxidative stress caused by nascent-protein misfolding and aggregation. Relays hydrogen peroxide as a signal to the transcription factor YAP1 by inducing the formation of intramolecular disulfide bonds in YAP1, which causes its nuclear accumulation and activation. Can act alternatively as peroxidase and molecular chaperone. Oxidative stress and heat shock exposure cause a reversible shift of the protein structure from low MW species to high MW complexes, triggering a peroxidase-to-chaperone functional switch. The chaperone function of the protein enhances resistance to heat shock. The sequence is that of Peroxiredoxin TSA1 from Saccharomyces cerevisiae (strain ATCC 204508 / S288c) (Baker's yeast).